The primary structure comprises 341 residues: Serine/threonine-protein kinase-like protein At5g23170 (341 aa).

The 283-residue stretch at 16-298 folds into the Protein kinase domain; sequence FSPSKLIGKG…FGEITAEIVA (283 aa). ATP-binding positions include 22-30 and lysine 51; that span reads IGKGSHGYV. Positions 52-75 are disordered; sequence TPSSLSPSSPSSSSSSKSEQTKKL. The segment covering 53 to 69 has biased composition (low complexity); the sequence is PSSLSPSSPSSSSSSKS. The active-site Proton acceptor is aspartate 153. The stretch at 311-332 forms a coiled coil; sequence MSVLRRVVKLKRRKKRLRETLT.

Belongs to the protein kinase superfamily. Ser/Thr protein kinase family. In terms of tissue distribution, ubiquitous. Higher expression in mature stamina and pollen.

The enzyme catalyses L-seryl-[protein] + ATP = O-phospho-L-seryl-[protein] + ADP + H(+). It carries out the reaction L-threonyl-[protein] + ATP = O-phospho-L-threonyl-[protein] + ADP + H(+). The sequence is that of Serine/threonine-protein kinase-like protein At5g23170 from Arabidopsis thaliana (Mouse-ear cress).